The following is a 644-amino-acid chain: Ribonuclease R (644 aa).

Residues 211-529 (RINYSHIPFI…LHRLLKELLF (319 aa)) enclose the RNB domain. An S1 motif domain is found at 573 to 644 (LELLEKEFLG…ITERIKEHVS (72 aa)).

This sequence belongs to the RNR ribonuclease family. RNase R subfamily.

The protein localises to the cytoplasm. The catalysed reaction is Exonucleolytic cleavage in the 3'- to 5'-direction to yield nucleoside 5'-phosphates.. Its function is as follows. 3'-5' exoribonuclease that releases 5'-nucleoside monophosphates and is involved in maturation of structured RNAs. The protein is Ribonuclease R of Helicobacter pylori (strain ATCC 700392 / 26695) (Campylobacter pylori).